The chain runs to 383 residues: Guanine nucleotide-binding protein alpha-1 subunit (383 aa).

A disordered region spans residues 1–20 (MGLLCSRSRHHTEDTDENTQ). The N-myristoyl glycine moiety is linked to residue G2. The S-palmitoyl cysteine moiety is linked to residue C5. The G-alpha domain occupies 37 to 383 (HIRKLLLLGA…RRNLLEAGLL (347 aa)). The interval 40-53 (KLLLLGAGESGKST) is G1 motif. 15 residues coordinate GTP: E48, S49, G50, K51, S52, T53, D162, L187, Y188, T193, G221, N287, K288, D290, and A355. Position 52 (S52) interacts with Mg(2+). A G2 motif region spans residues 185 to 193 (DVLYARVRT). A Mg(2+)-binding site is contributed by T193. Residues 214-223 (YRLFDVGGQR) form a G3 motif region. The tract at residues 283 to 290 (MLFLNKFD) is G4 motif. Positions 353-358 (TTALDQ) are G5 motif.

The protein belongs to the G-alpha family. In terms of assembly, g proteins are composed of 3 units; alpha, beta and gamma. The alpha chain contains the guanine nucleotide binding site. Interacts with RGS1, THF1, the pirin protein PRN1, GTG1 and GTG2. Binds to GCR1. May interact with ADT3. No interactions with RACK1A, RACK1B or RACK1C. Interacts with PLDALPHA1. Interacts with CAND2/PMTR1. The cofactor is Mg(2+). As to expression, more abundant in roots and/or leaves.

The protein localises to the cell membrane. Functionally, exhibits a fast rate of basal nucleotide exchange. Guanine nucleotide-binding proteins (G proteins) are involved as modulators or transducers in various transmembrane signaling systems. Together with GCR1, may regulate the cell cycle via a signaling cascade that uses phosphatidylinositol-specific phospholipase C (PI-PLC) as an effector and inositol 1,4,5-trisphosphate (IP(3)) as a second messenger. Promotes abscisic acid (ABA) responses in guard cells. Involved in the blue light (BL) signaling. Together with GCR1 and ADT3, required for BL-mediated synthesis of phenylpyruvate and subsequently of phenylalanine (Phe), in etiolated seedlings. Modulates root architecture (e.g. lateral root formation). Negatively regulated by RGS1. In collaboration with CAND2/PMTR1, regulates the melatonin-mediated stomatal closure involving H(2)O(2) and Ca(2+) signals. This chain is Guanine nucleotide-binding protein alpha-1 subunit, found in Arabidopsis thaliana (Mouse-ear cress).